Reading from the N-terminus, the 159-residue chain is Ribosomal RNA large subunit methyltransferase H (159 aa).

S-adenosyl-L-methionine contacts are provided by residues Leu76, Gly108, and 127-132 (FGLLTL).

This sequence belongs to the RNA methyltransferase RlmH family. Homodimer.

It localises to the cytoplasm. The enzyme catalyses pseudouridine(1915) in 23S rRNA + S-adenosyl-L-methionine = N(3)-methylpseudouridine(1915) in 23S rRNA + S-adenosyl-L-homocysteine + H(+). Functionally, specifically methylates the pseudouridine at position 1915 (m3Psi1915) in 23S rRNA. The protein is Ribosomal RNA large subunit methyltransferase H of Streptococcus agalactiae serotype Ia (strain ATCC 27591 / A909 / CDC SS700).